The chain runs to 196 residues: Ribonuclease HII (196 aa).

The RNase H type-2 domain maps to 9–196; that stretch reads GLVCGIDEAG…GPVARQLSLL (188 aa). Residues Asp15, Glu16, and Asp107 each coordinate a divalent metal cation.

This sequence belongs to the RNase HII family. It depends on Mn(2+) as a cofactor. Requires Mg(2+) as cofactor.

It localises to the cytoplasm. The catalysed reaction is Endonucleolytic cleavage to 5'-phosphomonoester.. Endonuclease that specifically degrades the RNA of RNA-DNA hybrids. In Dechloromonas aromatica (strain RCB), this protein is Ribonuclease HII.